Consider the following 585-residue polypeptide: Protein NRT1/ PTR FAMILY 4.6 (585 aa).

Helical transmembrane passes span Gly-28–Ala-48, Phe-75–Ser-95, Thr-96–Ile-116, Ala-142–Leu-162, Phe-184–Val-204, Gly-211–Leu-231, Ile-343–Gln-363, Ile-391–Phe-411, Ile-428–Lys-448, Leu-465–Phe-485, Ser-508–Val-528, and Phe-554–Met-574.

This sequence belongs to the major facilitator superfamily. Proton-dependent oligopeptide transporter (POT/PTR) (TC 2.A.17) family. As to expression, expressed in root hairs and in epidermis of both root tips and mature regions of roots. Detected in shoots, stems, flowers, siliques and imbibed seeds. Expressed in vascular tissues in cotyledons, trus leaves, hypocotyls, roots and inflorescence stems.

The protein resides in the cell membrane. Its function is as follows. Low-affinity proton-dependent nitrate transporter. Involved in constitutive nitrate uptake. Not involved in histidine or dipeptides transport. Involved in (+)-abscisic acid (ABA) transport, but not in gibberellin, indole-3-acetic acid or jasmonic acid import. Mediates cellular ABA uptake. Nitrate does not compete with abscisic acid as a substrate of NPF4.6. This chain is Protein NRT1/ PTR FAMILY 4.6 (NPF4.6), found in Arabidopsis thaliana (Mouse-ear cress).